The sequence spans 60 residues: Ribosome biogenesis protein Nop10 (60 aa).

The segment at 37 to 60 (APAPFDPADPHGKYRRALKERRRL) is disordered. Residues 49-60 (KYRRALKERRRL) show a composition bias toward basic residues.

This sequence belongs to the NOP10 family.

In terms of biological role, involved in ribosome biogenesis; more specifically in 18S rRNA pseudouridylation and in cleavage of pre-rRNA. The protein is Ribosome biogenesis protein Nop10 of Halobacterium salinarum (strain ATCC 29341 / DSM 671 / R1).